The chain runs to 287 residues: Protease HtpX (287 aa).

A run of 2 helical transmembrane segments spans residues 4–24 (IFLLIATNLAVLLVASIVMSI) and 33–53 (GGLLVFAAIFGFGGAFISLAI). A Zn(2+)-binding site is contributed by H139. The active site involves E140. H143 contacts Zn(2+). Transmembrane regions (helical) follow at residues 154–174 (LIQGVVNTFVIFAARVVAGII) and 195–215 (AVVFVLDMLFGILASIIVAYF). Residue E220 participates in Zn(2+) binding.

This sequence belongs to the peptidase M48B family. Zn(2+) is required as a cofactor.

The protein localises to the cell inner membrane. The sequence is that of Protease HtpX from Shewanella sp. (strain ANA-3).